A 243-amino-acid chain; its full sequence is UPF0702 transmembrane protein YkjA (243 aa).

The next 3 helical transmembrane spans lie at 3–23, 34–54, and 58–78; these read WMVWVFLLKPVIVFSIAYILF, MNNFDLLLTFAIGTIISEPIL, and LPMSIYYAGAFLVLYLIMSKL.

This sequence belongs to the UPF0702 family.

It localises to the cell membrane. The chain is UPF0702 transmembrane protein YkjA (ykjA) from Bacillus subtilis (strain 168).